We begin with the raw amino-acid sequence, 188 residues long: Elongation factor P (188 aa).

This sequence belongs to the elongation factor P family.

Its subcellular location is the cytoplasm. The protein operates within protein biosynthesis; polypeptide chain elongation. Functionally, involved in peptide bond synthesis. Stimulates efficient translation and peptide-bond synthesis on native or reconstituted 70S ribosomes in vitro. Probably functions indirectly by altering the affinity of the ribosome for aminoacyl-tRNA, thus increasing their reactivity as acceptors for peptidyl transferase. This chain is Elongation factor P, found in Chlorobium chlorochromatii (strain CaD3).